The primary structure comprises 57 residues: uncharacterized protein (57 aa).

A coiled-coil region spans residues 9 to 45 (NWQEEIRKIIIERVRREAKKRLLEETRKLRMEMKSSK).

This is an uncharacterized protein from Archaeoglobus fulgidus (strain ATCC 49558 / DSM 4304 / JCM 9628 / NBRC 100126 / VC-16).